A 248-amino-acid polypeptide reads, in one-letter code: Spherulin-1B (248 aa).

Positions 1-20 (MQVRNILVALVVVCFAVSEA) are cleaved as a signal peptide. The Cupin type-1 domain maps to 61–207 (FDFKNSKLGV…SLNISSIQTV (147 aa)). Positions 110, 112, 117, and 157 each coordinate Mn(2+). Asn200 carries N-linked (GlcNAc...) asparagine glycosylation.

It belongs to the germin family.

It is found in the secreted. It localises to the cell wall. The sequence is that of Spherulin-1B from Physarum polycephalum (Slime mold).